The sequence spans 225 residues: Ribosomal RNA small subunit methyltransferase G (225 aa).

S-adenosyl-L-methionine is bound by residues Gly96, Phe101, 146–147 (AE), and Arg160.

Belongs to the methyltransferase superfamily. RNA methyltransferase RsmG family.

Its subcellular location is the cytoplasm. Its function is as follows. Specifically methylates the N7 position of a guanine in 16S rRNA. In Mycoplasma mobile (strain ATCC 43663 / 163K / NCTC 11711) (Mesomycoplasma mobile), this protein is Ribosomal RNA small subunit methyltransferase G.